Reading from the N-terminus, the 256-residue chain is Alcohol dehydrogenase (256 aa).

12–35 (FVAGLGGIGLDTSREIVKAGPKNL) serves as a coordination point for NAD(+). Ser-140 contributes to the substrate binding site. The active-site Proton acceptor is the Tyr-153.

The protein belongs to the short-chain dehydrogenases/reductases (SDR) family. In terms of assembly, homodimer.

The catalysed reaction is a primary alcohol + NAD(+) = an aldehyde + NADH + H(+). It catalyses the reaction a secondary alcohol + NAD(+) = a ketone + NADH + H(+). This is Alcohol dehydrogenase (Adh) from Zaprionus tuberculatus (Vinegar fly).